The chain runs to 289 residues: 4-hydroxy-3-methylbut-2-enyl diphosphate reductase (289 aa).

Position 13 (Cys-13) interacts with [4Fe-4S] cluster. (2E)-4-hydroxy-3-methylbut-2-enyl diphosphate contacts are provided by His-42 and His-74. Residues His-42 and His-74 each coordinate dimethylallyl diphosphate. Isopentenyl diphosphate contacts are provided by His-42 and His-74. Cys-96 provides a ligand contact to [4Fe-4S] cluster. (2E)-4-hydroxy-3-methylbut-2-enyl diphosphate is bound at residue His-124. His-124 serves as a coordination point for dimethylallyl diphosphate. Position 124 (His-124) interacts with isopentenyl diphosphate. Glu-126 (proton donor) is an active-site residue. Thr-165 lines the (2E)-4-hydroxy-3-methylbut-2-enyl diphosphate pocket. Position 193 (Cys-193) interacts with [4Fe-4S] cluster. Ser-221, Asn-223, and Ser-265 together coordinate (2E)-4-hydroxy-3-methylbut-2-enyl diphosphate. Residues Ser-221, Asn-223, and Ser-265 each contribute to the dimethylallyl diphosphate site. Isopentenyl diphosphate-binding residues include Ser-221, Asn-223, and Ser-265.

It belongs to the IspH family. Requires [4Fe-4S] cluster as cofactor.

The enzyme catalyses isopentenyl diphosphate + 2 oxidized [2Fe-2S]-[ferredoxin] + H2O = (2E)-4-hydroxy-3-methylbut-2-enyl diphosphate + 2 reduced [2Fe-2S]-[ferredoxin] + 2 H(+). The catalysed reaction is dimethylallyl diphosphate + 2 oxidized [2Fe-2S]-[ferredoxin] + H2O = (2E)-4-hydroxy-3-methylbut-2-enyl diphosphate + 2 reduced [2Fe-2S]-[ferredoxin] + 2 H(+). The protein operates within isoprenoid biosynthesis; dimethylallyl diphosphate biosynthesis; dimethylallyl diphosphate from (2E)-4-hydroxy-3-methylbutenyl diphosphate: step 1/1. It functions in the pathway isoprenoid biosynthesis; isopentenyl diphosphate biosynthesis via DXP pathway; isopentenyl diphosphate from 1-deoxy-D-xylulose 5-phosphate: step 6/6. Its activity is regulated as follows. Highly sensitive to dioxygen. Catalyzes the conversion of 1-hydroxy-2-methyl-2-(E)-butenyl 4-diphosphate (HMBPP) into a mixture of isopentenyl diphosphate (IPP) and dimethylallyl diphosphate (DMAPP). Acts in the terminal step of the DOXP/MEP pathway for isoprenoid precursor biosynthesis. This is 4-hydroxy-3-methylbut-2-enyl diphosphate reductase from Aquifex aeolicus (strain VF5).